The primary structure comprises 64 residues: Prokaryotic ubiquitin-like protein Pup (64 aa).

The segment at Met1–Asp37 is disordered. The tract at residues Asp21–Tyr58 is ARC ATPase binding. A coiled-coil region spans residues Ala24–Glu52. Gln64 bears the Deamidated glutamine mark. Residue Gln64 forms an Isoglutamyl lysine isopeptide (Gln-Lys) (interchain with K-? in acceptor proteins) linkage.

The protein belongs to the prokaryotic ubiquitin-like protein family. As to quaternary structure, strongly interacts with the proteasome-associated ATPase ARC through a hydrophobic interface; the interacting region of Pup lies in its C-terminal half. There is one Pup binding site per ARC hexamer ring. Post-translationally, is modified by deamidation of its C-terminal glutamine to glutamate by the deamidase Dop, a prerequisite to the subsequent pupylation process.

It functions in the pathway protein degradation; proteasomal Pup-dependent pathway. Its function is as follows. Protein modifier that is covalently attached to lysine residues of substrate proteins, thereby targeting them for proteasomal degradation. The tagging system is termed pupylation. The sequence is that of Prokaryotic ubiquitin-like protein Pup from Rhodococcus erythropolis (strain PR4 / NBRC 100887).